The primary structure comprises 929 residues: MCESYSRSLLRVSVAQICQALGWDSVQLSACHLLTDVLQRYLQQLGRGCHRYSELYGRTDPILDDVGEAFQLMGVSLHELEDYIHNIEPVTFPHQIPSFPVSKNNVLQFPQPGSKDAEERKEYIPDYLPPIVSSQEEEEEEQVPTDGGTSAEAMQVPLEEDDELEEEEIINDENFLGKRPLDSPEAEELPAMKRPRLLSTKGDTLDVVLLEAREPLSSINTQKIPPMLSPVHVQDSTDLAPPSPEPPMLAPVAKSQMPTAKPLETKSFTPKTKTKTSSPGQKTKSPKTAQSPAMVGSPIRSPKTVSKEKKSPGRSKSPKSPKSPKVTTHIPQTPVRPETPNRTPSATLSEKISKETIQVKQIQTPPDAGKLNSENQPKKAVVADKTIEASIDAVIARACAEREPDPFEFSSGSESEGDIFTSPKRISGPECTTPKASTSANNFTKSGSTPLPLSGGTSSSDNSWTMDASIDEVVRKAKLGTPSNMPPNFPYISSPSVSPPTPEPLHKVYEEKTKLPSSVEVKKKLKKELKTKMKKKEKQRDREREKDKNKDKSKEKDKVKEKEKDKETGRETKYPWKEFLKEEEADPYKFKIKEFEDVDPKVKLKDGLVRKEKEKHKDKKKDREKGKKDKDKREKEKVKDKGREDKMKAPAPPLVLPPKELALPLFSPATASRVPAMLPSLLPVLPEKLFEEKEKVKEKEKKKDKKEKKKKKEKEKEKKEKEREKEKREREKREKEKEKHKHEKIKVEPVALAPSPVIPRLTLRVGAGQDKIVISKVVPAPEAKPAPSQNRPKTPPPAPAPAPGPMLVSPAPVPLPLLAQAAAGPALLPSPGPAASGASAKAPVRSVVTETVSTYVIRDEWGNQIWICPGCNKPDDGSPMIGCDDCDDWYHWPCVGIMTAPPEEMQWFCPKCANKKKDKKHKKRKHRAH.

Disordered stretches follow at residues 131 to 152 (IVSSQEEEEEEQVPTDGGTSAE) and 176 to 197 (LGKRPLDSPEAEELPAMKRPRL). Residues Ser-183, Ser-199, Ser-229, and Ser-243 each carry the phosphoserine modification. Disordered stretches follow at residues 221–358 (TQKI…ETIQ) and 405–578 (DPFE…PWKE). The segment covering 265 to 288 (TKSFTPKTKTKTSSPGQKTKSPKT) has biased composition (low complexity). Lys-266 is subject to N6-acetyllysine. Residues Ser-291, Ser-297, and Ser-301 each carry the phosphoserine modification. Polar residues-rich tracts occupy residues 340–358 (PNRTPSATLSEKISKETIQ) and 434–466 (PKASTSANNFTKSGSTPLPLSGGTSSSDNSWTM). Thr-501 is modified (phosphothreonine). The span at 504–514 (PLHKVYEEKTK) shows a compositional bias: basic and acidic residues. A compositionally biased stretch (basic residues) spans 523–537 (KKLKKELKTKMKKKE). The segment covering 538 to 578 (KQRDREREKDKNKDKSKEKDKVKEKEKDKETGRETKYPWKE) has biased composition (basic and acidic residues). Residue Lys-581 forms a Glycyl lysine isopeptide (Lys-Gly) (interchain with G-Cter in SUMO2) linkage. Composition is skewed to basic and acidic residues over residues 603-612 (KLKDGLVRKE) and 621-648 (KDREKGKKDKDKREKEKVKDKGREDKMK). Residues 603–658 (KLKDGLVRKEKEKHKDKKKDREKGKKDKDKREKEKVKDKGREDKMKAPAPPLVLPP) form a disordered region. At Ser-667 the chain carries Phosphoserine. Basic and acidic residues predominate over residues 692–701 (EKEKVKEKEK). The tract at residues 692–748 (EKEKVKEKEKKKDKKEKKKKKEKEKEKKEKEREKEKREREKREKEKEKHKHEKIKVE) is disordered. The span at 702–713 (KKDKKEKKKKKE) shows a compositional bias: basic residues. A compositionally biased stretch (basic and acidic residues) spans 714-737 (KEKEKKEKEREKEKREREKREKEK). Lys-746 participates in a covalent cross-link: Glycyl lysine isopeptide (Lys-Gly) (interchain with G-Cter in SUMO2). Residue Ser-755 is modified to Phosphoserine. Lys-776 bears the N6-acetyllysine mark. Over residues 778–787 (VPAPEAKPAP) the composition is skewed to low complexity. A disordered region spans residues 778-807 (VPAPEAKPAPSQNRPKTPPPAPAPAPGPML). Residues 793-804 (KTPPPAPAPAPG) show a composition bias toward pro residues. The segment at 865 to 915 (IWICPGCNKPDDGSPMIGCDDCDDWYHWPCVGIMTAPPEEMQWFCPKCANK) adopts a PHD-type zinc-finger fold. Zn(2+) is bound by residues Cys-868, Cys-871, Cys-883, Cys-886, His-891, Cys-894, Cys-909, and Cys-912.

Belongs to the TAF3 family. In terms of assembly, component of the TFIID basal transcription factor complex, composed of TATA-box-binding protein TBP, and a number of TBP-associated factors (TAFs), including TAF1, TAF2, TAF3, TAF4, TAF5, TAF6, TAF7, TAF8, TAF9, TAF10, TAF11, TAF12 and TAF13. Interacts with TAF10 via the histone fold. Interacts with TAF13, TBP, SAP130 and GCN5L2. Interacts with TBPL2.

It localises to the nucleus. Its function is as follows. The TFIID basal transcription factor complex plays a major role in the initiation of RNA polymerase II (Pol II)-dependent transcription. TFIID recognizes and binds promoters with or without a TATA box via its subunit TBP, a TATA-box-binding protein, and promotes assembly of the pre-initiation complex (PIC). The TFIID complex consists of TBP and TBP-associated factors (TAFs), including TAF1, TAF2, TAF3, TAF4, TAF5, TAF6, TAF7, TAF8, TAF9, TAF10, TAF11, TAF12 and TAF13. The TFIID complex structure can be divided into 3 modules TFIID-A, TFIID-B, and TFIID-C. TAF3 forms the TFIID-A module together with TAF5 and TBP. Required in complex with TBPL2 for the differentiation of myoblasts into myocytes. The TAF3-TBPL2 complex replaces TFIID at specific promoters at an early stage in the differentiation process. This is Transcription initiation factor TFIID subunit 3 (TAF3) from Homo sapiens (Human).